The following is a 333-amino-acid chain: Probable tRNA pseudouridine synthase B (333 aa).

Catalysis depends on Asp-66, which acts as the Nucleophile. Positions 233 to 308 (LKKIIVKDSA…EVVEITRVIM (76 aa)) constitute a PUA domain.

Belongs to the pseudouridine synthase TruB family. Type 2 subfamily.

It carries out the reaction uridine(55) in tRNA = pseudouridine(55) in tRNA. Functionally, could be responsible for synthesis of pseudouridine from uracil-55 in the psi GC loop of transfer RNAs. This is Probable tRNA pseudouridine synthase B from Methanococcus maripaludis (strain C6 / ATCC BAA-1332).